A 347-amino-acid chain; its full sequence is Heat-inducible transcription repressor HrcA (347 aa).

The protein belongs to the HrcA family.

In terms of biological role, negative regulator of class I heat shock genes (grpE-dnaK-dnaJ and groELS operons). Prevents heat-shock induction of these operons. This is Heat-inducible transcription repressor HrcA from Lactiplantibacillus plantarum (strain ATCC BAA-793 / NCIMB 8826 / WCFS1) (Lactobacillus plantarum).